Here is a 152-residue protein sequence, read N- to C-terminus: Probable flagellum biosynthesis repressor protein FlbT (152 aa).

Belongs to the FlbT family.

Has a post-transcriptional repressor function in flagellum biogenesis. Associates with the 5'-UTR of fljK mRNA and promotes its degradation. This Brucella canis (strain ATCC 23365 / NCTC 10854 / RM-666) protein is Probable flagellum biosynthesis repressor protein FlbT.